The primary structure comprises 233 residues: 7-cyano-7-deazaguanine synthase (233 aa).

11-21 (LSGGLDSSTVL) lines the ATP pocket. Zn(2+) is bound by residues Cys195, Cys203, Cys206, and Cys209.

Belongs to the QueC family. It depends on Zn(2+) as a cofactor.

It catalyses the reaction 7-carboxy-7-deazaguanine + NH4(+) + ATP = 7-cyano-7-deazaguanine + ADP + phosphate + H2O + H(+). The protein operates within purine metabolism; 7-cyano-7-deazaguanine biosynthesis. Its function is as follows. Catalyzes the ATP-dependent conversion of 7-carboxy-7-deazaguanine (CDG) to 7-cyano-7-deazaguanine (preQ(0)). The sequence is that of 7-cyano-7-deazaguanine synthase from Thermosynechococcus vestitus (strain NIES-2133 / IAM M-273 / BP-1).